The primary structure comprises 375 residues: Glutamate 5-kinase (375 aa).

ATP is bound at residue Lys17. 3 residues coordinate substrate: Ser57, Asp144, and Asn156. 176–177 (TD) contacts ATP. Positions 283-361 (KGELILDTGA…DEIEGILGYV (79 aa)) constitute a PUA domain.

It belongs to the glutamate 5-kinase family.

It is found in the cytoplasm. It catalyses the reaction L-glutamate + ATP = L-glutamyl 5-phosphate + ADP. It participates in amino-acid biosynthesis; L-proline biosynthesis; L-glutamate 5-semialdehyde from L-glutamate: step 1/2. Functionally, catalyzes the transfer of a phosphate group to glutamate to form L-glutamate 5-phosphate. The polypeptide is Glutamate 5-kinase (Thioalkalivibrio sulfidiphilus (strain HL-EbGR7)).